The primary structure comprises 1132 residues: SNF2 domain-containing protein CLASSY 4 (1132 aa).

Disordered stretches follow at residues 24–104 (NKSK…SKSF), 224–331 (LRGE…HHKK), 376–396 (DPVV…PRER), and 525–544 (PSVN…LPNR). The short motif at 47-54 (KRRVNMRD) is the Nuclear localization signal element. A compositionally biased stretch (basic and acidic residues) spans 81 to 90 (EYPEGKRDDE). Residues 92–103 (VGSTSGNLQSKS) show a composition bias toward polar residues. Residues 233–242 (SDEVVSLSSS) show a composition bias toward low complexity. Over residues 243–254 (SDDEEDPLEELG) the composition is skewed to acidic residues. Residues 255-269 (TDSREEVSGEDRDSG) show a composition bias toward basic and acidic residues. Acidic residues-rich tracts occupy residues 270-282 (ESDM…DSDS) and 291-309 (DSSD…EDEE). 3 stretches are compositionally biased toward basic and acidic residues: residues 310–326 (GGTR…SEKV), 376–392 (DPVV…EHGK), and 525–539 (PSVN…RKGD). A Helicase ATP-binding domain is found at 603–796 (SVGVKGSGGC…SNVLCLARPA (194 aa)). 616–623 (HKAGTGKT) contacts ATP. The DEAH box motif lies at 747 to 750 (DEGH). The 154-residue stretch at 934-1087 (DFIRISGTVK…ELVFSSTNEK (154 aa)) folds into the Helicase C-terminal domain.

Belongs to the SNF2/RAD54 helicase family. In terms of assembly, interacts with NRPD1.

It is found in the nucleus. Probable chromatin remodeling factor. The chain is SNF2 domain-containing protein CLASSY 4 (CLSY4) from Arabidopsis thaliana (Mouse-ear cress).